The chain runs to 217 residues: Vesicle-associated membrane protein 723 (217 aa).

Residues 1–192 (MAQQSLFYSF…KWFQNMKIKL (192 aa)) lie on the Cytoplasmic side of the membrane. The Longin domain occupies 10-114 (FIARGTVILV…SLNKEFGSNL (105 aa)). A v-SNARE coiled-coil homology domain is found at 130-186 (NLAKAKAQVSEVKSLMMENIEKVLARGVICEMLGSSESQPQAFYIKRTQMKRKKWFQ). Residues 193 to 213 (IVLAIIIALILIIILSVCGGF) traverse the membrane as a helical; Anchor for type IV membrane protein segment. At 214-217 (NCGK) the chain is on the vesicular side.

Belongs to the synaptobrevin family. As to expression, highly expressed in stems and roots. Detected in flowers and leaves.

The protein localises to the endoplasmic reticulum membrane. Its function is as follows. Involved in the targeting and/or fusion of transport vesicles to their target membrane. The protein is Vesicle-associated membrane protein 723 of Arabidopsis thaliana (Mouse-ear cress).